Here is a 426-residue protein sequence, read N- to C-terminus: Tyrosine--tRNA ligase (426 aa).

L-tyrosine is bound at residue tyrosine 37. Residues 42 to 51 carry the 'HIGH' region motif; sequence PTADSLHLGH. The L-tyrosine site is built by tyrosine 175 and glutamine 179. A 'KMSKS' region motif is present at residues 235–239; that stretch reads KFGKT. Lysine 238 contributes to the ATP binding site. Residues 357-415 enclose the S4 RNA-binding domain; the sequence is TDLMQALVESELQPSRGQARKAIAANGVTVNGIKQPDPDYVLNENDRYFSNYTLLRRGK.

This sequence belongs to the class-I aminoacyl-tRNA synthetase family. TyrS type 1 subfamily. In terms of assembly, homodimer.

The protein localises to the cytoplasm. It carries out the reaction tRNA(Tyr) + L-tyrosine + ATP = L-tyrosyl-tRNA(Tyr) + AMP + diphosphate + H(+). Catalyzes the attachment of tyrosine to tRNA(Tyr) in a two-step reaction: tyrosine is first activated by ATP to form Tyr-AMP and then transferred to the acceptor end of tRNA(Tyr). This chain is Tyrosine--tRNA ligase, found in Klebsiella pneumoniae (strain 342).